The primary structure comprises 126 residues: RutC family protein SSO3206 (126 aa).

This sequence belongs to the RutC family.

The sequence is that of RutC family protein SSO3206 from Saccharolobus solfataricus (strain ATCC 35092 / DSM 1617 / JCM 11322 / P2) (Sulfolobus solfataricus).